We begin with the raw amino-acid sequence, 253 residues long: Indole-3-glycerol phosphate synthase (253 aa).

This sequence belongs to the TrpC family.

It carries out the reaction 1-(2-carboxyphenylamino)-1-deoxy-D-ribulose 5-phosphate + H(+) = (1S,2R)-1-C-(indol-3-yl)glycerol 3-phosphate + CO2 + H2O. Its pathway is amino-acid biosynthesis; L-tryptophan biosynthesis; L-tryptophan from chorismate: step 4/5. The chain is Indole-3-glycerol phosphate synthase from Bacillus cereus (strain B4264).